The following is a 281-amino-acid chain: Oxidase pynE (281 aa).

The protein belongs to the avfA family.

It participates in secondary metabolite biosynthesis. Oxidase; part of the gene cluster that mediates the biosynthesis of pyranonigrins, a family of antioxidative compounds. The first step of pyranonigrins biosynthesis is performed by the hybrid PKS-NRPS synthetase that condenses 6 malonyl-CoA units to an acetyl starter unit, to form a 1,3,5-trioxotetradecane-6,8-dienyl-ACP. The enoyl reductase (ER) domain of pynA is likely to be functional during the first two rounds of polyketide chain extension, to generate the saturated C-C bonds of the alkyl side chain. PynA subsequently forms the amide bond between the acyl chain and L-serine. Although pynA has a terminal reductase domain, it appears to require the thioesterase pynI for the release of the straight-chain intermediate from pynA via the formation of a tetramic acid pyranonigrin J. The methyltransferase pynC then coverts pyranonigrin J to pyranonigrin I via N-methylation. The FAD-dependent monooxygenase pynG catalyzes an epoxidation-mediated cyclization to form the dihydro-gamma-pyrone moiety, followed by pynD-catalyzed oxidation of the alcohol to the ketone and enolization to yield the characteristic tetramic acid-fused gamma-pyrone core of pyranonigrin H. Pyranonigrin H is substrate of pynH for dehydration-mediated exo-methylene formation from the serine side chain to produce pyranonigrin E, before the oxidase pynE reduces the exo-methylene of pyranonigrin E into a pendant methyl to form pyranonigrin G. The FAD-linked oxidoreductase pynB performs the reverse reaction and converts pyranonigrin G back to pyranonigrin E. The chain is Oxidase pynE from Aspergillus niger (strain ATCC MYA-4892 / CBS 513.88 / FGSC A1513).